Reading from the N-terminus, the 393-residue chain is Phospholipid-transporting ATPase accessory subunit CRF1 (393 aa).

Residues 1–46 (MGLILRWKEKKQLSSKQNAQKSRKPANTSFRQQRLKAWQPILSPQS) are Cytoplasmic-facing. A helical membrane pass occupies residues 47 to 67 (VLPLLILMACVFAPIGIGLVV). Over 68–334 (STISVQRLVV…NSIIGAGNEA (267 aa)) the chain is Lumenal. The tract at residues 70-332 (ISVQRLVVNY…TTNSIIGAGN (263 aa)) is confers specificity for binding DNF3. N-linked (GlcNAc...) asparagine glycosylation is found at N78, N123, N187, N202, N213, N240, and N291. Cystine bridges form between C82-C126 and C179-C193. Residues 335 to 355 (LGIVYLIVAGIATLFAILFLI) form a helical membrane-spanning segment. The Cytoplasmic portion of the chain corresponds to 356–393 (KVIFKPRPMHDHSYLNFENSDTPFDESSVVSIPLREIL).

The protein belongs to the CDC50/LEM3 family. As to quaternary structure, component of a flippase complex consisting of DNF3 and YNR048W/CRF1. Interacts with DNF3; the interaction is direct and required for proper expression and endoplasmic reticulum (ER) export of either partner.

Its subcellular location is the golgi apparatus. It localises to the trans-Golgi network membrane. Accessory component of a P4-ATPase flippase complex which catalyzes the hydrolysis of ATP coupled to the transport of phosphatidylcholine and small amounts of phosphatidylethanolamine from the lumen to the cytosolic leaflet of the trans-Golgi network and ensures the maintenance of asymmetric distribution of phospholipids. May be involved in transport from early endosomes to the trans-Golgi network (TGN). The sequence is that of Phospholipid-transporting ATPase accessory subunit CRF1 from Saccharomyces cerevisiae (strain ATCC 204508 / S288c) (Baker's yeast).